A 272-amino-acid chain; its full sequence is Putative phosphoenolpyruvate synthase regulatory protein (272 aa).

Residue glycine 152 to threonine 159 coordinates ADP.

This sequence belongs to the pyruvate, phosphate/water dikinase regulatory protein family. PSRP subfamily.

The catalysed reaction is [pyruvate, water dikinase] + ADP = [pyruvate, water dikinase]-phosphate + AMP + H(+). It catalyses the reaction [pyruvate, water dikinase]-phosphate + phosphate + H(+) = [pyruvate, water dikinase] + diphosphate. Functionally, bifunctional serine/threonine kinase and phosphorylase involved in the regulation of the phosphoenolpyruvate synthase (PEPS) by catalyzing its phosphorylation/dephosphorylation. This is Putative phosphoenolpyruvate synthase regulatory protein from Pseudomonas savastanoi pv. phaseolicola (strain 1448A / Race 6) (Pseudomonas syringae pv. phaseolicola (strain 1448A / Race 6)).